A 120-amino-acid polypeptide reads, in one-letter code: Large ribosomal subunit protein uL18 (120 aa).

It belongs to the universal ribosomal protein uL18 family. In terms of assembly, part of the 50S ribosomal subunit; part of the 5S rRNA/L5/L18/L25 subcomplex. Contacts the 5S and 23S rRNAs.

Its function is as follows. This is one of the proteins that bind and probably mediate the attachment of the 5S RNA into the large ribosomal subunit, where it forms part of the central protuberance. The polypeptide is Large ribosomal subunit protein uL18 (Methylorubrum populi (strain ATCC BAA-705 / NCIMB 13946 / BJ001) (Methylobacterium populi)).